Reading from the N-terminus, the 139-residue chain is Ribulose bisphosphate carboxylase small subunit, plasmid (139 aa).

This sequence belongs to the RuBisCO small chain family. In terms of assembly, heterohexadecamer of 8 large and 8 small subunits.

RuBisCO catalyzes two reactions: the carboxylation of D-ribulose 1,5-bisphosphate, the primary event in carbon dioxide fixation, as well as the oxidative fragmentation of the pentose substrate. Both reactions occur simultaneously and in competition at the same active site. Although the small subunit is not catalytic it is essential for maximal activity. The protein is Ribulose bisphosphate carboxylase small subunit, plasmid of Cupriavidus necator (strain ATCC 17699 / DSM 428 / KCTC 22496 / NCIMB 10442 / H16 / Stanier 337) (Ralstonia eutropha).